Consider the following 173-residue polypeptide: RNA 2',3'-cyclic phosphodiesterase (173 aa).

H38 (proton donor) is an active-site residue. Short sequence motifs (HXTX) lie at residues 38–41 and 118–121; these read HITV and HLTI. The Proton acceptor role is filled by H118.

It belongs to the 2H phosphoesterase superfamily. ThpR family.

It carries out the reaction a 3'-end 2',3'-cyclophospho-ribonucleotide-RNA + H2O = a 3'-end 2'-phospho-ribonucleotide-RNA + H(+). Hydrolyzes RNA 2',3'-cyclic phosphodiester to an RNA 2'-phosphomonoester. The polypeptide is RNA 2',3'-cyclic phosphodiesterase (Methanocaldococcus jannaschii (strain ATCC 43067 / DSM 2661 / JAL-1 / JCM 10045 / NBRC 100440) (Methanococcus jannaschii)).